Reading from the N-terminus, the 416-residue chain is Enterobactin exporter EntS (416 aa).

Topologically, residues 1-21 are cytoplasmic; it reads MNKQSWLLNLSLLKTHPAFRA. Residues 22–42 traverse the membrane as a helical segment; that stretch reads VFLARFISIVSLGLLGVAVPV. Topologically, residues 43 to 55 are periplasmic; the sequence is QIQMMTHSTWQVG. A helical transmembrane segment spans residues 56-76; sequence LSVTLTGGAMFVGLMVGGVLA. At 77–83 the chain is on the cytoplasmic side; it reads DRYERKK. Residues 84–104 form a helical membrane-spanning segment; that stretch reads VILLARGTCGIGFIGLCLNAL. Topologically, residues 105–109 are periplasmic; the sequence is LPEPS. Residues 110–130 form a helical membrane-spanning segment; that stretch reads LLAIYLLGLWDGFFASLGVTA. At 131–156 the chain is on the cytoplasmic side; the sequence is LLAATPALVGRENLMQAGAITMLTVR. A helical membrane pass occupies residues 157-177; the sequence is LGSVISPMIGGLLLATGGVAW. Asn178 is a topological domain (periplasmic). The helical transmembrane segment at 179-199 threads the bilayer; sequence YGLAAAGTFITLLPLLSLPAL. The Cytoplasmic segment spans residues 200 to 218; the sequence is PPPPQPREHPLKSLLAGFR. The chain crosses the membrane as a helical span at residues 219 to 239; that stretch reads FLLASPLVGGIALLGGLLTMA. Residues 240–256 are Periplasmic-facing; that stretch reads SAVRVLYPALADNWQMS. A helical membrane pass occupies residues 257–277; the sequence is AAQIGFLYAAIPLGAAIGALT. Over 278 to 287 the chain is Cytoplasmic; it reads SGKLAHSARP. The helical transmembrane segment at 288-307 threads the bilayer; that stretch reads GLLMLLSTLGSFLAIGLFGL. At 308–313 the chain is on the periplasmic side; that stretch reads MPMWIL. Residues 314–336 traverse the membrane as a helical segment; sequence GVVCLALFGWLSAVSSLLQYTML. Over 337–356 the chain is Cytoplasmic; it reads QTQTPEAMLGRINGLWTAQN. The helical transmembrane segment at 357-377 threads the bilayer; that stretch reads VTGDAIGAALLGGLGAMMTPV. A topological domain (periplasmic) is located at residue Ala378. The chain crosses the membrane as a helical span at residues 379–399; that stretch reads SASASGFGLLIIGVLLLLVLV. Residues 400-416 are Cytoplasmic-facing; that stretch reads ELRRFRQTPPQMTASDS.

Belongs to the major facilitator superfamily. EntS (TC 2.A.1.38) family.

The protein localises to the cell inner membrane. Its function is as follows. Component of an export pathway for enterobactin. This is Enterobactin exporter EntS from Escherichia coli O7:K1 (strain IAI39 / ExPEC).